A 284-amino-acid chain; its full sequence is Aspartate dehydrogenase domain-containing protein (284 aa).

It belongs to the L-aspartate dehydrogenase family.

In Xenopus tropicalis (Western clawed frog), this protein is Aspartate dehydrogenase domain-containing protein (aspdh).